We begin with the raw amino-acid sequence, 503 residues long: Transforming protein rel polyprotein (503 aa).

Positions 16-305 (PYIEIFEQPR…GNKAKRQRST (290 aa)) constitute an RHD domain. At Ser275 the chain carries Phosphoserine; by host PKA. 2 disordered regions span residues 286-306 (RYLPDEEDPSGNKAKRQRSTL) and 318-342 (AVTERPKAAPIPTVNPEGKLKKEPN). The Nuclear localization signal motif lies at 298-303 (KAKRQR).

It localises to the host cytoplasm. In terms of biological role, this transforming protein appears to have a protein-kinase activity. In Galliformes, this protein is Transforming protein rel polyprotein (V-REL).